Here is a 398-residue protein sequence, read N- to C-terminus: MAIEHASSIKKVKNFTLNFGPQHPAAHGVLRLVLELNGEVVARADPHIGLLHRGTEKLIEYKTYTQALPYFDRLDYVSMMCQEHAYSLAVEKLLHCEVPERAQYIRVLFSEITRILNHLLALTTHAMDVGALTPFLWAFEEREKLIEFYERVSGSRMHAAYIRPGGVACDLPANLCEDIYLFCQQFASRIDEMEEMLTNNRIWKQRLVDIGIVTAENAFAWGFSGVLLRGSGVAWDLRKTQPYDVYNRMIFDVPVGTQGDCYDRYLCRVEEMRQSIHIIMQCLNQLPKGMIKADDKKITPPSRSQMKQSMESLIHHFKLFTEGYTVPNSETYTSVEAPKGEFGVYLVSNGTNRPYRCKIRAPGFLHLQGLDMMSKNHMLADVVTIIGTQDIVFGEVDR.

The [4Fe-4S] cluster site is built by Cys261, Cys267, and Cys282.

It belongs to the complex I 49 kDa subunit family. Complex I is composed of about 45 different subunits. This is a component of the iron-sulfur (IP) fragment of the enzyme. [4Fe-4S] cluster serves as cofactor.

The protein localises to the mitochondrion. It carries out the reaction a ubiquinone + NADH + 5 H(+)(in) = a ubiquinol + NAD(+) + 4 H(+)(out). Functionally, core subunit of the mitochondrial membrane respiratory chain NADH dehydrogenase (Complex I) that is believed to belong to the minimal assembly required for catalysis. Complex I functions in the transfer of electrons from NADH to the respiratory chain. The immediate electron acceptor for the enzyme is believed to be ubiquinone. Component of the iron-sulfur (IP) fragment of the enzyme. The chain is NADH dehydrogenase [ubiquinone] iron-sulfur protein 2 (NAD7) from Nephroselmis olivacea (Green alga).